Reading from the N-terminus, the 322-residue chain is Acetyl-coenzyme A carboxylase carboxyl transferase subunit alpha (322 aa).

The CoA carboxyltransferase C-terminal domain occupies 32–293; the sequence is DISEEIARLE…KRALQDALRQ (262 aa).

It belongs to the AccA family. As to quaternary structure, acetyl-CoA carboxylase is a heterohexamer composed of biotin carboxyl carrier protein (AccB), biotin carboxylase (AccC) and two subunits each of ACCase subunit alpha (AccA) and ACCase subunit beta (AccD).

It is found in the cytoplasm. The catalysed reaction is N(6)-carboxybiotinyl-L-lysyl-[protein] + acetyl-CoA = N(6)-biotinyl-L-lysyl-[protein] + malonyl-CoA. Its pathway is lipid metabolism; malonyl-CoA biosynthesis; malonyl-CoA from acetyl-CoA: step 1/1. Functionally, component of the acetyl coenzyme A carboxylase (ACC) complex. First, biotin carboxylase catalyzes the carboxylation of biotin on its carrier protein (BCCP) and then the CO(2) group is transferred by the carboxyltransferase to acetyl-CoA to form malonyl-CoA. This chain is Acetyl-coenzyme A carboxylase carboxyl transferase subunit alpha, found in Aromatoleum aromaticum (strain DSM 19018 / LMG 30748 / EbN1) (Azoarcus sp. (strain EbN1)).